A 164-amino-acid polypeptide reads, in one-letter code: 6,7-dimethyl-8-ribityllumazine synthase (164 aa).

5-amino-6-(D-ribitylamino)uracil is bound by residues Phe28, 62–64, and 86–88; these read ALE and AVI. Residue 91–92 participates in (2S)-2-hydroxy-3-oxobutyl phosphate binding; that stretch reads ET. His94 functions as the Proton donor in the catalytic mechanism. Asn119 is a binding site for 5-amino-6-(D-ribitylamino)uracil. Arg133 serves as a coordination point for (2S)-2-hydroxy-3-oxobutyl phosphate.

It belongs to the DMRL synthase family.

It catalyses the reaction (2S)-2-hydroxy-3-oxobutyl phosphate + 5-amino-6-(D-ribitylamino)uracil = 6,7-dimethyl-8-(1-D-ribityl)lumazine + phosphate + 2 H2O + H(+). The protein operates within cofactor biosynthesis; riboflavin biosynthesis; riboflavin from 2-hydroxy-3-oxobutyl phosphate and 5-amino-6-(D-ribitylamino)uracil: step 1/2. Catalyzes the formation of 6,7-dimethyl-8-ribityllumazine by condensation of 5-amino-6-(D-ribitylamino)uracil with 3,4-dihydroxy-2-butanone 4-phosphate. This is the penultimate step in the biosynthesis of riboflavin. This is 6,7-dimethyl-8-ribityllumazine synthase from Nitrosomonas europaea (strain ATCC 19718 / CIP 103999 / KCTC 2705 / NBRC 14298).